We begin with the raw amino-acid sequence, 400 residues long: Peroxisome biogenesis factor 16 (400 aa).

The tract at residues 176–226 (QKQFQNKRPAVTMSINNNNNINNNDNNNINNNNNTNDDNFNNNNNNNNNRR) is disordered. The segment covering 190-224 (INNNNNINNNDNNNINNNNNTNDDNFNNNNNNNNN) has biased composition (low complexity).

Belongs to the peroxin-16 family.

It is found in the cytoplasm. Its function is as follows. Required for peroxisome membrane biogenesis. This chain is Peroxisome biogenesis factor 16 (pex16), found in Dictyostelium discoideum (Social amoeba).